The chain runs to 262 residues: Type III pantothenate kinase (262 aa).

An ATP-binding site is contributed by 5–12; the sequence is DAGNTRSK. Substrate is bound by residues Tyr102 and 110-113; that span reads GSDR. The Proton acceptor role is filled by Asp112. Asp132 contributes to the K(+) binding site. Thr135 is a binding site for ATP. Thr190 lines the substrate pocket.

This sequence belongs to the type III pantothenate kinase family. In terms of assembly, homodimer. NH4(+) serves as cofactor. K(+) is required as a cofactor.

The protein localises to the cytoplasm. It carries out the reaction (R)-pantothenate + ATP = (R)-4'-phosphopantothenate + ADP + H(+). Its pathway is cofactor biosynthesis; coenzyme A biosynthesis; CoA from (R)-pantothenate: step 1/5. Its function is as follows. Catalyzes the phosphorylation of pantothenate (Pan), the first step in CoA biosynthesis. In Idiomarina loihiensis (strain ATCC BAA-735 / DSM 15497 / L2-TR), this protein is Type III pantothenate kinase.